A 163-amino-acid chain; its full sequence is IQSTSMDQGILTEDSMNSFIRTLIQAGIWKNKVPKQMARTKDGTQTTVKKTEAEADAMASQDTRLGFQPIVSVDAELLRQQRRFSSPRVLLSENTPLEPPPLYLTEEPVVLNRTSRRKREGKSHRGEYSVCDSESRWVTDKSSAVDIRGHQVTVLGEIRMGPS.

Residues 1–3 (IQS) form the signal peptide. Positions 4-119 (TSMDQGILTE…VLNRTSRRKR (116 aa)) are excised as a propeptide. N-linked (GlcNAc...) asparagine glycosylation occurs at Asn112.

It belongs to the NGF-beta family.

Its subcellular location is the secreted. In terms of biological role, seems to promote the survival of visceral and proprioceptive sensory neurons. This chain is Neurotrophin-3 (NTF3), found in Epicrates cenchria (Rainbow boa).